We begin with the raw amino-acid sequence, 23 residues long: Benzaldehyde dehydrogenase [NAD(+)] I (23 aa).

It belongs to the aldehyde dehydrogenase family. Homotetramer.

The catalysed reaction is benzaldehyde + NAD(+) + H2O = benzoate + NADH + 2 H(+). The protein is Benzaldehyde dehydrogenase [NAD(+)] I of Acinetobacter guillouiae (Acinetobacter genomosp. 11).